The primary structure comprises 287 residues: Homoserine kinase (287 aa).

Pro78–Thr88 lines the ATP pocket.

Belongs to the GHMP kinase family. Homoserine kinase subfamily.

It localises to the cytoplasm. It catalyses the reaction L-homoserine + ATP = O-phospho-L-homoserine + ADP + H(+). It participates in amino-acid biosynthesis; L-threonine biosynthesis; L-threonine from L-aspartate: step 4/5. Catalyzes the ATP-dependent phosphorylation of L-homoserine to L-homoserine phosphate. The protein is Homoserine kinase of Lactobacillus gasseri (strain ATCC 33323 / DSM 20243 / BCRC 14619 / CIP 102991 / JCM 1131 / KCTC 3163 / NCIMB 11718 / NCTC 13722 / AM63).